A 346-amino-acid polypeptide reads, in one-letter code: Probable dual-specificity RNA methyltransferase RlmN (346 aa).

The active-site Proton acceptor is the Glu-91. Residues 97–325 (TEKRLTVCVS…VSVRYSKGLE (229 aa)) enclose the Radical SAM core domain. Cys-104 and Cys-330 form a disulfide bridge. [4Fe-4S] cluster-binding residues include Cys-111, Cys-115, and Cys-118. Residues 158 to 159 (GE), Ser-188, 211 to 213 (SLH), and Asn-287 contribute to the S-adenosyl-L-methionine site. Residue Cys-330 is the S-methylcysteine intermediate of the active site.

Belongs to the radical SAM superfamily. RlmN family. The cofactor is [4Fe-4S] cluster.

It localises to the cytoplasm. The enzyme catalyses adenosine(2503) in 23S rRNA + 2 reduced [2Fe-2S]-[ferredoxin] + 2 S-adenosyl-L-methionine = 2-methyladenosine(2503) in 23S rRNA + 5'-deoxyadenosine + L-methionine + 2 oxidized [2Fe-2S]-[ferredoxin] + S-adenosyl-L-homocysteine. The catalysed reaction is adenosine(37) in tRNA + 2 reduced [2Fe-2S]-[ferredoxin] + 2 S-adenosyl-L-methionine = 2-methyladenosine(37) in tRNA + 5'-deoxyadenosine + L-methionine + 2 oxidized [2Fe-2S]-[ferredoxin] + S-adenosyl-L-homocysteine. Its function is as follows. Specifically methylates position 2 of adenine 2503 in 23S rRNA and position 2 of adenine 37 in tRNAs. This is Probable dual-specificity RNA methyltransferase RlmN from Picosynechococcus sp. (strain ATCC 27264 / PCC 7002 / PR-6) (Agmenellum quadruplicatum).